The primary structure comprises 396 residues: GTPase Obg (396 aa).

The Obg domain occupies 1-159 (MKFVDEASIY…RTLKLEMKVL (159 aa)). The interval 120 to 146 (GGHHGLGNTRFKSSTNRAPRQTTKGTV) is disordered. The segment covering 129–144 (RFKSSTNRAPRQTTKG) has biased composition (polar residues). Positions 160–333 (ADVGLLGLPN…LCLDLMTALD (174 aa)) constitute an OBG-type G domain. GTP-binding positions include 166–173 (GLPNAGKS), 191–195 (FTTLV), 213–216 (DIPG), 283–286 (NKTD), and 314–316 (SAI). Serine 173 and threonine 193 together coordinate Mg(2+).

Belongs to the TRAFAC class OBG-HflX-like GTPase superfamily. OBG GTPase family. Monomer. The cofactor is Mg(2+).

It localises to the cytoplasm. Functionally, an essential GTPase which binds GTP, GDP and possibly (p)ppGpp with moderate affinity, with high nucleotide exchange rates and a fairly low GTP hydrolysis rate. Plays a role in control of the cell cycle, stress response, ribosome biogenesis and in those bacteria that undergo differentiation, in morphogenesis control. The protein is GTPase Obg of Marinomonas sp. (strain MWYL1).